We begin with the raw amino-acid sequence, 146 residues long: MGFTDKQEALVNSSWELFKQNPGYSVLFYNIILKKAPATKGMFSFLKDSAGVVDSPKLQAHAEKVFGMVHDSAVQLRVSGEVVLGDATLGAIHIQKGVVDSHFVVVKEALLETIKEASGEKWSEELSTAWEVAYEGLASAIKKAMS.

The Globin domain occupies 2-146; it reads GFTDKQEALV…LASAIKKAMS (145 aa). Nitrated tyrosine is present on residues Tyr24 and Tyr29. Ser44 contributes to the heme b binding site. A Phosphoserine modification is found at Ser44. Residue His61 participates in O2 binding. Residues Lys64, His93, and Lys96 each coordinate heme b. Tyr134 carries the post-translational modification Nitrated tyrosine.

It belongs to the plant globin family. Monomer. Post-translationally, nitrated in effective nodules and particularly in hypoxic conditions; this mechanism may play a protective role in the symbiosis by buffering toxic peroxynitrite NO(2)(-). Nitration level decrease during nodule senescence. Phosphorylation at Ser-44 disrupts the molecular environment of its porphyrin ring oxygen binding pocket, thus leading to a reduced oxygen consumption and to the delivery of oxygen O(2) to symbiosomes. As to expression, root nodules.

Its subcellular location is the cytoplasm. It is found in the cytosol. The protein localises to the nucleus. In terms of biological role, leghemoglobin that reversibly binds oxygen O(2) through a pentacoordinated heme iron. In root nodules, facilitates the diffusion of oxygen to the bacteroids while preventing the bacterial nitrogenase from being inactivated by buffering dioxygen, nitric oxide and carbon monoxide, and promoting the formation of reactive oxygen species (ROS, e.g. H(2)O(2)). This role is essential for symbiotic nitrogen fixation (SNF). The chain is Leghemoglobin Lb120-29 from Pisum sativum (Garden pea).